A 248-amino-acid polypeptide reads, in one-letter code: 3-deoxy-manno-octulosonate cytidylyltransferase (248 aa).

This sequence belongs to the KdsB family.

It is found in the cytoplasm. It carries out the reaction 3-deoxy-alpha-D-manno-oct-2-ulosonate + CTP = CMP-3-deoxy-beta-D-manno-octulosonate + diphosphate. The protein operates within nucleotide-sugar biosynthesis; CMP-3-deoxy-D-manno-octulosonate biosynthesis; CMP-3-deoxy-D-manno-octulosonate from 3-deoxy-D-manno-octulosonate and CTP: step 1/1. It participates in bacterial outer membrane biogenesis; lipopolysaccharide biosynthesis. Activates KDO (a required 8-carbon sugar) for incorporation into bacterial lipopolysaccharide in Gram-negative bacteria. This Leptospira interrogans serogroup Icterohaemorrhagiae serovar copenhageni (strain Fiocruz L1-130) protein is 3-deoxy-manno-octulosonate cytidylyltransferase.